A 529-amino-acid chain; its full sequence is MKKIMLVFITLILVSLPIAQQTEAKDASAFHKENLISSMAPPASPPASPKTPIEKKHADEIDKYIQGLDYNKNNVLVYHGDAVTNVPPRKGYKDGNEYIVVEKKKKSINQNNADIQVVNAISSLTYPGALVKANSELVENQPDVLPVKRDSLTLSIDLPGMTNQDNKIVVKNATKSNVNNAVNTLVERWNEKYAQAYPNVSAKIDYDDEMAYSESQLIAKFGTAFKAVNNSLNVNFGAISEGKMQEEVISFKQIYYNVNVNEPTRPSRFFGKAVTKEQLQALGVNAENPPAYISSVAYGRQVYLKLSTNSHSTKVKAAFDAAVSGKSVSGDVELTNIIKNSSFKAVIYGGSAKDEVQIIDGNLGDLRDILKKGATFNRETPGVPIAYTTNFLKDNELAVIKNNSEYIETTSKAYTDGKINIDHSGGYVAQFNISWDEINYDPEGNEIVQHKNWSENNKSKLAHFTSSIYLPGNARNINVYAKECTGLAWEWWRTVIDDRNLPLVKNRNISIWGTTLYPKYSNSVDNPIE.

An N-terminal signal peptide occupies residues 1–24; sequence MKKIMLVFITLILVSLPIAQQTEA. The next 4 beta stranded transmembrane spans lie at 214-227, 234-243, 312-321, and 329-341; these read ESQL…AFKA, VNFGAISEGK, STKVKAAFDA, and SGDV…IKNS. The Conserved undecapeptide motif lies at 483–493; it reads ECTGLAWEWWR. Positions 515 to 516 match the Cholesterol binding motif; it reads TL.

It belongs to the cholesterol-dependent cytolysin family. As to quaternary structure, homooligomeric pore complex of 35 to 50 subunits; when inserted in the host membrane.

The protein resides in the secreted. It localises to the host membrane. Its subcellular location is the host cell membrane. Activity of listeriolysin O is regulated on multiple levels. It should be high in the phagosome, thereby allowing escape of the bacteria from the phagosomal compartment. Then, once inside the host cytosol, the activity must be controlled to prevent lysis of the host plasma membrane and loss of the intracellular environment. Functionally, a cholesterol-dependent toxin that causes cytolysis by forming pores in cholesterol containing host membranes. After binding to target membranes, the protein undergoes a major conformation change, leading to its insertion in the host membrane and formation of an oligomeric pore complex. Cholesterol is required for binding to host membranes, membrane insertion and pore formation; cholesterol binding is mediated by a Thr-Leu pair in the C-terminus. Acts as a major virulence factor required for the escape of bacteria from phagosomal vacuoles and entry into the host cytosol. Can be reversibly inactivated by oxidation. In Listeria monocytogenes serotype 4b (strain CLIP80459), this protein is Listeriolysin O (hly).